A 212-amino-acid polypeptide reads, in one-letter code: Adenine phosphoribosyltransferase (212 aa).

Belongs to the purine/pyrimidine phosphoribosyltransferase family. As to quaternary structure, homodimer.

The protein localises to the cytoplasm. It carries out the reaction AMP + diphosphate = 5-phospho-alpha-D-ribose 1-diphosphate + adenine. It participates in purine metabolism; AMP biosynthesis via salvage pathway; AMP from adenine: step 1/1. Catalyzes a salvage reaction resulting in the formation of AMP, that is energically less costly than de novo synthesis. The protein is Adenine phosphoribosyltransferase of Mycobacterium tuberculosis (strain ATCC 25618 / H37Rv).